Reading from the N-terminus, the 176-residue chain is Natural cytotoxicity triggering receptor 3 (176 aa).

The N-terminal stretch at 1 to 18 (MAWMLLLILIMVYPGSCA) is a signal peptide. Positions 19-126 (LWVSQPPEIR…VGTGNGTRLV (108 aa)) constitute an Ig-like domain. The Extracellular segment spans residues 19–135 (LWVSQPPEIR…VVEKEYPQLG (117 aa)). Cys39 and Cys108 are oxidised to a cystine. N-linked (GlcNAc...) asparagine glycosylation is found at Asn42 and Asn121. The chain crosses the membrane as a helical span at residues 136–156 (AGTVLLLRAGFYAVSFLSVAV). The Cytoplasmic portion of the chain corresponds to 157–176 (GSTLYYQGKCHCHMGTHCHS).

It belongs to the natural cytotoxicity receptor (NCR) family. In terms of assembly, homodimer in the unliganted form. Interacts with CD3Z. Interacts with and is activated by binding to NCR3LG1. Interacts with and is activated by binding to BAG6. Interacts with and is inhibited by binding to LGALS3.

The protein resides in the cell membrane. Functionally, cell membrane receptor of natural killer/NK cells that is activated by binding of extracellular ligands including BAG6 and NCR3LG1. Stimulates NK cells cytotoxicity toward neighboring cells producing these ligands. It controls, for instance, NK cells cytotoxicity against tumor cells. Engagement of NCR3 by BAG6 also promotes myeloid dendritic cells (DC) maturation, both through killing DCs that did not acquire a mature phenotype, and inducing the release by NK cells of TNFA and IFNG that promote DC maturation. This is Natural cytotoxicity triggering receptor 3 (NCR3) from Macaca fascicularis (Crab-eating macaque).